The chain runs to 151 residues: Myosin light polypeptide 6 (151 aa).

The residue at position 2 (Cys2) is an N-acetylcysteine. EF-hand domains lie at 7-42 (EQTA…LGQN), 84-119 (GCFE…LGEK), and 119-151 (KMTE…VLSG).

In terms of assembly, myosin is a hexamer of 2 heavy chains and 4 light chains.

Its function is as follows. Regulatory light chain of myosin. Does not bind calcium. The protein is Myosin light polypeptide 6 (MYL6) of Gallus gallus (Chicken).